A 158-amino-acid polypeptide reads, in one-letter code: UPF0758 protein VC_1786 (158 aa).

An MPN domain is found at 37–158 (TFARTENTTE…SVSFAERGWL (122 aa)). Positions 108, 110, and 121 each coordinate Zn(2+). The JAMM motif motif lies at 108 to 121 (HNHPSGDPEPSQAD).

The protein belongs to the UPF0758 family.

This is UPF0758 protein VC_1786 from Vibrio cholerae serotype O1 (strain ATCC 39315 / El Tor Inaba N16961).